A 182-amino-acid polypeptide reads, in one-letter code: Small ribosomal subunit protein uS4c (182 aa).

Residues 13 to 34 (GLTSKRPRSGSDPKNQLRSGKR) are disordered. The S4 RNA-binding domain occupies 82–143 (MRLDNILFRL…KQRSKALIQN (62 aa)).

The protein belongs to the universal ribosomal protein uS4 family. In terms of assembly, part of the 30S ribosomal subunit. Contacts protein S5. The interaction surface between S4 and S5 is involved in control of translational fidelity.

Its subcellular location is the plastid. The protein localises to the chloroplast. In terms of biological role, one of the primary rRNA binding proteins, it binds directly to 16S rRNA where it nucleates assembly of the body of the 30S subunit. Functionally, with S5 and S12 plays an important role in translational accuracy. In Iris lutescens (Crimean iris), this protein is Small ribosomal subunit protein uS4c (rps4).